The chain runs to 354 residues: Guanine nucleotide-binding protein G(i) subunit alpha-1 (354 aa).

A lipid anchor (N-myristoyl glycine) is attached at Gly2. Cys3 carries S-palmitoyl cysteine lipidation. Positions 32-354 constitute a G-alpha domain; that stretch reads REVKLLLLGA…KNNLKDCGLF (323 aa). The tract at residues 35–48 is G1 motif; it reads KLLLLGAGESGKST. GTP is bound by residues 43-48, 150-151, and 175-178; these read ESGKST, DS, and LRTR. Ser47 is a binding site for Mg(2+). The segment at 173–181 is G2 motif; the sequence is DVLRTRVKT. Thr181 contacts Mg(2+). The interval 196–205 is G3 motif; that stretch reads FKMFDVGGQR. GTP contacts are provided by residues 200 to 204, 269 to 272, and Ala326; these read DVGGQ and NKKD. The G4 motif stretch occupies residues 265-272; the sequence is ILFLNKKD. Residues 324–329 are G5 motif; that stretch reads TCATDT.

Belongs to the G-alpha family. G(i/o/t/z) subfamily. Heterotrimeric G proteins are composed of 3 units; alpha, beta and gamma. The alpha chain contains the guanine nucleotide binding site. Part of a spindle orientation complex. Identified in complex with the beta subunit GNB1 and the gamma subunit GNG1. Identified in complex with the beta subunit GNB1 and the gamma subunit GNG2. GTP binding causes dissociation of the heterotrimer, liberating the individual subunits so that they can interact with downstream effector proteins. Post-translationally, myristoylation at Gly-2 is required for membrane anchoring before palmitoylation. In terms of processing, palmitoylation at Cys-3 varies with membrane lipid composition.

Its subcellular location is the nucleus. It is found in the cytoplasm. It localises to the cell membrane. The protein resides in the cytoskeleton. The protein localises to the microtubule organizing center. Its subcellular location is the centrosome. It is found in the cell cortex. It localises to the membrane. The enzyme catalyses GTP + H2O = GDP + phosphate + H(+). Guanine nucleotide-binding proteins (G proteins) function as transducers downstream of G protein-coupled receptors (GPCRs) in numerous signaling cascades. The alpha chain contains the guanine nucleotide binding site and alternates between an active, GTP-bound state and an inactive, GDP-bound state. Signaling by an activated GPCR promotes GDP release and GTP binding. The alpha subunit has a low GTPase activity that converts bound GTP to GDP, thereby terminating the signal. Both GDP release and GTP hydrolysis are modulated by numerous regulatory proteins. Signaling is mediated via effector proteins, such as adenylate cyclase. Inhibits adenylate cyclase activity, leading to decreased intracellular cAMP levels. Required for cortical dynein-dynactin complex recruitment during metaphase. The polypeptide is Guanine nucleotide-binding protein G(i) subunit alpha-1 (gnai1) (Xenopus laevis (African clawed frog)).